Reading from the N-terminus, the 422-residue chain is L-2-hydroxyglutarate dehydrogenase (422 aa).

It belongs to the L2HGDH family. The cofactor is FAD.

It localises to the cell inner membrane. It catalyses the reaction (S)-2-hydroxyglutarate + a quinone = a quinol + 2-oxoglutarate. Its pathway is amino-acid degradation. In terms of biological role, catalyzes the dehydrogenation of L-2-hydroxyglutarate (L2HG) to alpha-ketoglutarate and couples to the respiratory chain by feeding electrons from the reaction into the membrane quinone pool. Functions in a L-lysine degradation pathway that proceeds via cadaverine, glutarate and L-2-hydroxyglutarate. Also displays some oxidase activity in vitro on L-2-hydroxyglutarate with O2 as the electron acceptor, but this activity is most likely not physiological. In Salmonella houtenae, this protein is L-2-hydroxyglutarate dehydrogenase.